The following is a 227-amino-acid chain: Probable methylthioribulose-1-phosphate dehydratase (227 aa).

Residue Cys-87 participates in substrate binding. His-105 and His-107 together coordinate Zn(2+). The Proton donor/acceptor role is filled by Glu-129. Residue His-185 participates in Zn(2+) binding.

The protein belongs to the aldolase class II family. MtnB subfamily. Zn(2+) serves as cofactor.

It localises to the cytoplasm. The catalysed reaction is 5-(methylsulfanyl)-D-ribulose 1-phosphate = 5-methylsulfanyl-2,3-dioxopentyl phosphate + H2O. The protein operates within amino-acid biosynthesis; L-methionine biosynthesis via salvage pathway; L-methionine from S-methyl-5-thio-alpha-D-ribose 1-phosphate: step 2/6. In terms of biological role, catalyzes the dehydration of methylthioribulose-1-phosphate (MTRu-1-P) into 2,3-diketo-5-methylthiopentyl-1-phosphate (DK-MTP-1-P). The sequence is that of Probable methylthioribulose-1-phosphate dehydratase from Drosophila ananassae (Fruit fly).